Reading from the N-terminus, the 119-residue chain is Ribonuclease P protein component (119 aa).

The protein belongs to the RnpA family. As to quaternary structure, consists of a catalytic RNA component (M1 or rnpB) and a protein subunit.

It carries out the reaction Endonucleolytic cleavage of RNA, removing 5'-extranucleotides from tRNA precursor.. Functionally, RNaseP catalyzes the removal of the 5'-leader sequence from pre-tRNA to produce the mature 5'-terminus. It can also cleave other RNA substrates such as 4.5S RNA. The protein component plays an auxiliary but essential role in vivo by binding to the 5'-leader sequence and broadening the substrate specificity of the ribozyme. This Chlamydia muridarum (strain MoPn / Nigg) protein is Ribonuclease P protein component.